A 350-amino-acid chain; its full sequence is Biotin synthase (350 aa).

The Radical SAM core domain occupies 41–268 (NEVQISRLLS…KSRVRLSAGR (228 aa)). The [4Fe-4S] cluster site is built by Cys-56, Cys-60, and Cys-63. 4 residues coordinate [2Fe-2S] cluster: Cys-100, Cys-131, Cys-191, and Arg-263.

Belongs to the radical SAM superfamily. Biotin synthase family. As to quaternary structure, homodimer. The cofactor is [4Fe-4S] cluster. It depends on [2Fe-2S] cluster as a cofactor.

The enzyme catalyses (4R,5S)-dethiobiotin + (sulfur carrier)-SH + 2 reduced [2Fe-2S]-[ferredoxin] + 2 S-adenosyl-L-methionine = (sulfur carrier)-H + biotin + 2 5'-deoxyadenosine + 2 L-methionine + 2 oxidized [2Fe-2S]-[ferredoxin]. It functions in the pathway cofactor biosynthesis; biotin biosynthesis; biotin from 7,8-diaminononanoate: step 2/2. Its function is as follows. Catalyzes the conversion of dethiobiotin (DTB) to biotin by the insertion of a sulfur atom into dethiobiotin via a radical-based mechanism. The sequence is that of Biotin synthase from Shewanella piezotolerans (strain WP3 / JCM 13877).